The following is a 761-amino-acid chain: Xaa-Pro dipeptidyl-peptidase (761 aa).

Active-site charge relay system residues include Ser-347, Asp-467, and His-497.

This sequence belongs to the peptidase S15 family. In terms of assembly, homodimer.

It localises to the cytoplasm. The catalysed reaction is Hydrolyzes Xaa-Pro-|- bonds to release unblocked, N-terminal dipeptides from substrates including Ala-Pro-|-p-nitroanilide and (sequentially) Tyr-Pro-|-Phe-Pro-|-Gly-Pro-|-Ile.. Functionally, removes N-terminal dipeptides sequentially from polypeptides having unsubstituted N-termini provided that the penultimate residue is proline. The chain is Xaa-Pro dipeptidyl-peptidase from Streptococcus agalactiae serotype III (strain NEM316).